The chain runs to 415 residues: Alpha-2Db adrenergic receptor (415 aa).

Topologically, residues 1–33 are extracellular; it reads MDLSTITFLLPNSSEDTNGTSAPRLPPHSQCAS. 2 N-linked (GlcNAc...) asparagine glycosylation sites follow: N12 and N18. The helical transmembrane segment at 34 to 58 threads the bilayer; sequence VLIVLVVTVIILVTIVGNVLVVVAV. Over 59–70 the chain is Cytoplasmic; the sequence is FTSRALRAPQNL. Residues 71–96 form a helical membrane-spanning segment; that stretch reads FLVSLAAADILVATLVIPFSLANEVM. Over 97-106 the chain is Extracellular; sequence GYWYLGSTWC. Cysteines 106 and 179 form a disulfide. A helical membrane pass occupies residues 107-129; it reads AFYLALDVLFCTSSIVHLCAISL. At 130–150 the chain is on the cytoplasmic side; sequence DRYWSVTKAVSYNLKRTPRRI. Residues 151-173 form a helical membrane-spanning segment; sequence KIMITVVWVISAVISFPPLLMTK. Over 174-184 the chain is Extracellular; the sequence is HDELECLLNNE. N183 carries an N-linked (GlcNAc...) asparagine glycan. A helical membrane pass occupies residues 185-208; sequence TWYILSSCIVSFFAPGLIMILVYC. The Cytoplasmic segment spans residues 209–339; that stretch reads RIYRVAKQRA…QMREKRFTFV (131 aa). Residues 234-299 form a disordered region; it reads QSETCFVRKG…EGAQSCPKPN (66 aa). Positions 276-286 are enriched in basic residues; that stretch reads NRHRNSRFAKS. Residues 340–363 form a helical membrane-spanning segment; it reads LAVVMGVFVLCWFPFFFTYSLHAI. Residues 364–376 lie on the Extracellular side of the membrane; the sequence is CRKSCTIPDSLFN. Residues 377 to 397 traverse the membrane as a helical segment; sequence LFFWIGYCNSSVNPIIYTIFN. Over 398-415 the chain is Cytoplasmic; sequence RDFRKAFKKIMCRHSTRT.

The protein belongs to the G-protein coupled receptor 1 family. Adrenergic receptor subfamily. ADRA2D sub-subfamily.

It is found in the cell membrane. Its function is as follows. Alpha-2 adrenergic receptors mediate the catecholamine-induced inhibition of adenylate cyclase through the action of G proteins. The order of potency for this receptor is dexmedetomidine &gt; norepinephrine = epinephrine &gt; oxymetazoline. This Danio rerio (Zebrafish) protein is Alpha-2Db adrenergic receptor (adra2db).